The sequence spans 433 residues: Ribosome biogenesis protein WDR12 homolog (433 aa).

At methionine 1 the chain carries N-acetylmethionine. A ubiquitin-like (UBL) domain region spans residues 12–96; that stretch reads LHVKFVTKLD…ERTLEIEYIR (85 aa). WD repeat units follow at residues 108-146, 148-191, 203-242, 270-308, 310-350, 356-396, and 399-433; these read LHDD…SHIL, GHSG…SVDS, GHKA…SEGE, GHTQ…DSLN, FCGK…TSAP, SHSS…PLSV, and THND…IAIS. Residues 238-263 form a disordered region; sequence TSEGESVSVKKRKGNNQAEESQSEGE.

This sequence belongs to the WD repeat WDR12/YTM1 family. In terms of assembly, interacts with PES. Interacts with BOP1.

It is found in the nucleus. Its subcellular location is the nucleolus. The protein resides in the nucleoplasm. In terms of biological role, required for maturation of ribosomal RNAs and formation of the large ribosomal subunit. The chain is Ribosome biogenesis protein WDR12 homolog from Arabidopsis thaliana (Mouse-ear cress).